The primary structure comprises 111 residues: Iron-sulfur cluster assembly protein CyaY (111 aa).

Belongs to the frataxin family.

Its function is as follows. Involved in iron-sulfur (Fe-S) cluster assembly. May act as a regulator of Fe-S biogenesis. The polypeptide is Iron-sulfur cluster assembly protein CyaY (Cupriavidus necator (strain ATCC 17699 / DSM 428 / KCTC 22496 / NCIMB 10442 / H16 / Stanier 337) (Ralstonia eutropha)).